Here is a 705-residue protein sequence, read N- to C-terminus: tRNA 5-methylaminomethyl-2-thiouridine biosynthesis bifunctional protein MnmC (705 aa).

The interval Met-1–Ala-241 is tRNA (mnm(5)s(2)U34)-methyltransferase. Residues Ile-289–Val-705 form an FAD-dependent cmnm(5)s(2)U34 oxidoreductase region.

In the N-terminal section; belongs to the methyltransferase superfamily. tRNA (mnm(5)s(2)U34)-methyltransferase family. This sequence in the C-terminal section; belongs to the DAO family. Requires FAD as cofactor.

The protein resides in the cytoplasm. The catalysed reaction is 5-aminomethyl-2-thiouridine(34) in tRNA + S-adenosyl-L-methionine = 5-methylaminomethyl-2-thiouridine(34) in tRNA + S-adenosyl-L-homocysteine + H(+). Functionally, catalyzes the last two steps in the biosynthesis of 5-methylaminomethyl-2-thiouridine (mnm(5)s(2)U) at the wobble position (U34) in tRNA. Catalyzes the FAD-dependent demodification of cmnm(5)s(2)U34 to nm(5)s(2)U34, followed by the transfer of a methyl group from S-adenosyl-L-methionine to nm(5)s(2)U34, to form mnm(5)s(2)U34. The polypeptide is tRNA 5-methylaminomethyl-2-thiouridine biosynthesis bifunctional protein MnmC (Pseudoalteromonas atlantica (strain T6c / ATCC BAA-1087)).